The primary structure comprises 496 residues: Putative zinc finger CCCH domain-containing protein 48 (496 aa).

2 disordered regions span residues 1-77 and 108-194; these read MADS…QPVH and MGAG…HPDD. A compositionally biased stretch (acidic residues) spans 143–156; it reads HLAEEEEEEEEEHY. C3H1-type zinc fingers lie at residues 377–406, 439–467, and 469–496; these read EHKTKLCAEYYSRGLGCPRGNTCKYAHGED, KYKTKLCKTFTSGGLCLFAANCRFAHGEV, and LGKKEPCWYFFSGQTCPRGDTCGFRHSY.

The sequence is that of Putative zinc finger CCCH domain-containing protein 48 from Oryza sativa subsp. japonica (Rice).